Consider the following 383-residue polypeptide: tRNA(Met) cytidine acetate ligase (383 aa).

ATP is bound by residues 7–20 (IAEFNPFHSGHEFL), Gly101, Asn153, and 178–179 (RI).

Belongs to the TmcAL family.

It is found in the cytoplasm. The catalysed reaction is cytidine(34) in elongator tRNA(Met) + acetate + ATP = N(4)-acetylcytidine(34) in elongator tRNA(Met) + AMP + diphosphate. In terms of biological role, catalyzes the formation of N(4)-acetylcytidine (ac(4)C) at the wobble position of elongator tRNA(Met), using acetate and ATP as substrates. First activates an acetate ion to form acetyladenylate (Ac-AMP) and then transfers the acetyl group to tRNA to form ac(4)C34. This is tRNA(Met) cytidine acetate ligase from Lactobacillus helveticus (strain DPC 4571).